The following is a 667-amino-acid chain: Cyclin-dependent kinase 17 (667 aa).

Disordered stretches follow at residues 1 to 70 (MTAY…SSLN) and 85 to 184 (DSEY…LRKM). Acidic residues-rich tracts occupy residues 99–111 (EDFD…EFED) and 119–144 (DEDD…ITPE). Positions 151 to 164 (TGVTTQTTPPSNNT) are enriched in polar residues. The region spanning 328–609 (YEKLDKLGEG…AAEAVKHPFL (282 aa)) is the Protein kinase domain. ATP is bound by residues 334–342 (LGEGTYATV) and Lys-357. Catalysis depends on Asp-449, which acts as the Proton acceptor. The Mg(2+) site is built by Asn-454 and Asp-467. Positions 642–667 (HHHSSRRHHRGTLVKDKYRMHSSHHT) are disordered. Basic residues predominate over residues 644–653 (HSSRRHHRGT).

Belongs to the protein kinase superfamily. CMGC Ser/Thr protein kinase family. CDC2/CDKX subfamily. Interacts with cyy-1; the interaction is required to activate pct-1. Requires Mg(2+) as cofactor.

It is found in the cytoplasm. The protein localises to the cell projection. It localises to the dendrite. Its subcellular location is the axon. The enzyme catalyses L-seryl-[protein] + ATP = O-phospho-L-seryl-[protein] + ADP + H(+). It carries out the reaction L-threonyl-[protein] + ATP = O-phospho-L-threonyl-[protein] + ADP + H(+). Its function is as follows. Serine/threonine-protein kinase, which, in association with cyy-1, regulates the trafficking of synaptic vesicles in the DA9 motor neuron and probably also in the DD motor neurons and in RIA interneurons. Functionally, sufficient for synaptic vesicle trafficking in the DA9 motor neuron. The sequence is that of Cyclin-dependent kinase 17 from Caenorhabditis elegans.